Consider the following 497-residue polypeptide: Guanosine-5'-triphosphate,3'-diphosphate pyrophosphatase (497 aa).

This sequence belongs to the GppA/Ppx family. GppA subfamily.

The enzyme catalyses guanosine 3'-diphosphate 5'-triphosphate + H2O = guanosine 3',5'-bis(diphosphate) + phosphate + H(+). Its pathway is purine metabolism; ppGpp biosynthesis; ppGpp from GTP: step 2/2. Functionally, catalyzes the conversion of pppGpp to ppGpp. Guanosine pentaphosphate (pppGpp) is a cytoplasmic signaling molecule which together with ppGpp controls the 'stringent response', an adaptive process that allows bacteria to respond to amino acid starvation, resulting in the coordinated regulation of numerous cellular activities. The chain is Guanosine-5'-triphosphate,3'-diphosphate pyrophosphatase from Vibrio vulnificus (strain YJ016).